The following is a 255-amino-acid chain: 3-oxo-5-alpha-steroid 4-dehydrogenase 1 (255 aa).

The next 5 membrane-spanning stretches (helical) occupy residues 6–26, 82–102, 107–127, 142–162, and 205–225; these read LCLL…AFVG, VLLA…PVLI, PTLL…GYLQ, VTHP…VINI, and FALA…LCAL.

Belongs to the steroid 5-alpha reductase family.

It localises to the microsome membrane. The protein resides in the endoplasmic reticulum membrane. The enzyme catalyses a 3-oxo-5alpha-steroid + NADP(+) = a 3-oxo-Delta(4)-steroid + NADPH + H(+). It catalyses the reaction 5alpha-pregnane-3,20-dione + NADP(+) = progesterone + NADPH + H(+). The catalysed reaction is 17beta-hydroxy-5alpha-androstan-3-one + NADP(+) = testosterone + NADPH + H(+). It carries out the reaction androst-4-ene-3,17-dione + NADPH + H(+) = 5alpha-androstan-3,17-dione + NADP(+). Its function is as follows. Converts testosterone into 5-alpha-dihydrotestosterone and progesterone or corticosterone into their corresponding 5-alpha-3-oxosteroids. It plays a central role in sexual differentiation and androgen physiology. This is 3-oxo-5-alpha-steroid 4-dehydrogenase 1 from Mus musculus (Mouse).